The primary structure comprises 493 residues: Cobyric acid synthase (493 aa).

Residues 246–440 (PIDIAVIKMP…IHGVFDGVAF (195 aa)) form the GATase cobBQ-type domain. The active-site Nucleophile is the C326. The active site involves H432.

This sequence belongs to the CobB/CobQ family. CobQ subfamily.

It participates in cofactor biosynthesis; adenosylcobalamin biosynthesis. Catalyzes amidations at positions B, D, E, and G on adenosylcobyrinic A,C-diamide. NH(2) groups are provided by glutamine, and one molecule of ATP is hydrogenolyzed for each amidation. This is Cobyric acid synthase from Clostridium botulinum (strain Loch Maree / Type A3).